A 200-amino-acid polypeptide reads, in one-letter code: MKYLHTICLLFIFVARGNSRSCDFCHNIGKECDGYEKECSSPEDVCGKVLLEISSASLSVRTVHKNCFSSSVCKLEQFDVNIGHHSYIRGRINCCEKEQCEDRPFPGLPLSQPNGYYCPGALGLFTEDSTEFEAICKGTETKCINIVGHRHEDFPGDISYNLKGCISSCPLLSLSNATHEENRNYLEKVECKDAFQLARL.

The first 19 residues, M1–S19, serve as a signal peptide directing secretion. 7 disulfide bridges follow: C22-C46, C25-C32, C39-C67, C73-C94, C95-C100, C118-C143, and C136-C165. Residue N176 is glycosylated (N-linked (GlcNAc...) asparagine).

The protein belongs to the CNF-like-inhibitor family. In terms of assembly, homomer of 110 kDa composed of 20-25-kDa subunits. N-glycosylated. The glycosidic chain may contain superficial sialic acid residues. In terms of tissue distribution, expressed by the liver.

Its subcellular location is the secreted. Inhibits the enzymatic activity of basic phospholipase A2. Specifically neutralizes PLA2, myotoxic, edema-forming, cytolytic, and anti-coagulant activities, as well as intracerebral lethal effect of the basic myotoxin I from the same venom (AC P0DQP6), crotoxin heterodimer and crotoxin subunit B alone. Does not block the enzymatic activity of crude acidic PLA2 fractions from the same venom. This is Phospholipase A2 inhibitor CgMIP-I from Cerrophidion godmani (Porthidium godmani).